The following is a 107-amino-acid chain: High mobility group protein HMG-I/HMG-Y (107 aa).

The tract at residues Met1 to Gln107 is disordered. Ser2 carries the post-translational modification N-acetylserine. The residue at position 7 (Lys7) is an N6-acetyllysine. Ser8 is modified (ADP-ribosylserine). Ser9 is modified (ADP-ribosylserine; alternate). Residue Ser9 is modified to Phosphoserine; alternate. The residue at position 15 (Lys15) is an N6-acetyllysine; alternate. Lys15 participates in a covalent cross-link: Glycyl lysine isopeptide (Lys-Gly) (interchain with G-Cter in SUMO2); alternate. A compositionally biased stretch (basic and acidic residues) spans Lys15–Arg24. The a.T hook 1 DNA-binding region spans Thr21–Lys31. Arg26 is modified (asymmetric dimethylarginine; alternate). Position 26 is an omega-N-methylarginine; alternate (Arg26). A Symmetric dimethylarginine; alternate modification is found at Arg26. Ser36 is subject to Phosphoserine; by HIPK2 and CDC2. Residues Thr39 and Val42 each carry the phosphothreonine modification. Phosphoserine is present on residues Ser44 and Ser49. Thr53 is subject to Phosphothreonine; by HIPK2 and CDC2. The segment at residues Thr53 to Gly63 is a DNA-binding region (a.T hook 2). An interaction with HIPK2 region spans residues Thr53–Thr77. Positions Lys55 to Lys74 are enriched in basic residues. Asymmetric dimethylarginine; by PRMT6; alternate occurs at positions 58 and 60. Omega-N-methylarginine; by PRMT6; alternate is present on residues Arg58 and Arg60. At Lys67 the chain carries Phosphothreonine. Residue Thr78 is modified to Phosphothreonine; by HIPK2 and CDC2. Positions Thr78–Lys89 form a DNA-binding region, a.T hook 3. A compositionally biased stretch (acidic residues) spans Glu93–Gln107. At Ser99 the chain carries Phosphoserine. 2 positions are modified to phosphoserine; by CK: Ser102 and Ser103.

This sequence belongs to the HMGA family. As to quaternary structure, interacts with HIPK2. In terms of processing, constitutively phosphorylated on two or three sites. Hyperphosphorylated at early stages of apoptosis, followed by dephosphorylation and methylation, which coincides with chromatin condensation. Isoforms HMG-I and HMG-Y can be phosphorylated by HIPK2. Phosphorylation of HMG-I at Ser-36, Thr-53 and Thr-78 and of HMG-Y at Thr-42 and Thr-67 by HIPK2 modulates DNA-binding affinity. Post-translationally, HMG-Y is not methylated. Methylation at Arg-58 is mutually exclusive with methylation at Arg-60.

The protein localises to the nucleus. It localises to the chromosome. Functionally, HMG-I/Y bind preferentially to the minor groove of A+T rich regions in double-stranded DNA. It is suggested that these proteins could function in nucleosome phasing and in the 3'-end processing of mRNA transcripts. They are also involved in the transcription regulation of genes containing, or in close proximity to A+T-rich regions. This Homo sapiens (Human) protein is High mobility group protein HMG-I/HMG-Y (HMGA1).